A 176-amino-acid polypeptide reads, in one-letter code: Glutathione-regulated potassium-efflux system ancillary protein KefF (176 aa).

Residues histidine 8, 14 to 17 (SHAN), 65 to 68 (MQWY), and 105 to 108 (TTGG) each bind FMN.

Belongs to the NAD(P)H dehydrogenase (quinone) family. KefF subfamily. In terms of assembly, homodimer. Interacts with KefC. FMN serves as cofactor.

The protein localises to the cell inner membrane. It carries out the reaction a quinone + NADH + H(+) = a quinol + NAD(+). It catalyses the reaction a quinone + NADPH + H(+) = a quinol + NADP(+). Its function is as follows. Regulatory subunit of a potassium efflux system that confers protection against electrophiles. Required for full activity of KefC. Shows redox enzymatic activity, but this enzymatic activity is not required for activation of KefC. In Salmonella dublin (strain CT_02021853), this protein is Glutathione-regulated potassium-efflux system ancillary protein KefF.